The chain runs to 441 residues: Proline--tRNA ligase (441 aa).

The protein belongs to the class-II aminoacyl-tRNA synthetase family. ProS type 2 subfamily. In terms of assembly, homodimer.

The protein resides in the cytoplasm. The enzyme catalyses tRNA(Pro) + L-proline + ATP = L-prolyl-tRNA(Pro) + AMP + diphosphate. Its function is as follows. Catalyzes the attachment of proline to tRNA(Pro) in a two-step reaction: proline is first activated by ATP to form Pro-AMP and then transferred to the acceptor end of tRNA(Pro). This chain is Proline--tRNA ligase, found in Methylorubrum extorquens (strain PA1) (Methylobacterium extorquens).